Here is a 693-residue protein sequence, read N- to C-terminus: Sodium-dependent phosphate transport protein 2B (693 aa).

A disordered region spans residues 1–46 (MAPWPELENSQPTSEKYTVKADGEQSAKPEKAKETEKDDTGTPITK). Topologically, residues 1–89 (MAPWPELENS…KWSERDTKGK (89 aa)) are cytoplasmic. Residues 17 to 40 (YTVKADGEQSAKPEKAKETEKDDT) are compositionally biased toward basic and acidic residues. A helical transmembrane segment spans residues 90 to 110 (ILCVFQGIGKFILLLVFLYFF). The Extracellular segment spans residues 111-135 (VCSLDVLSSAFQLVGGKVAGKFFNN). Residues 136-156 (NSIMSNPLAGMVIGVLVTVLV) form a helical membrane-spanning segment. The Cytoplasmic portion of the chain corresponds to 157–212 (QSSSTSTSIVVSMVASSLLPVHAAIPIIMGANIGTSITNTIVALMQAGDRKEFRRA). A helical transmembrane segment spans residues 213 to 233 (FAGATVHDFFNWLSVLVLLPL). The Extracellular segment spans residues 234 to 361 (EAATGYLERL…IFVNFNLSDA (128 aa)). Cys302 and Cys349 are disulfide-bonded. N-linked (GlcNAc...) asparagine glycans are attached at residues Asn307 and Asn320. Residues 362-382 (IVGTILLITSLLILCTCLILI) form a helical membrane-spanning segment. The Cytoplasmic segment spans residues 383–408 (VKLLGSVLRGQVAAVIKKTINTDFPY). A helical membrane pass occupies residues 409-429 (PFSWVTGYLAILVGAGMTFIV). Residues 430–485 (QSSSVFTSAMTPLIGIGVISIQRAYPLTLGANIGTTTTAILAALASPGSTLKSSLQ) lie on the Extracellular side of the membrane. The chain crosses the membrane as a helical span at residues 486–506 (IALCHFFFNISGIILWYPIPF). Topologically, residues 507–525 (TRLPIRLAKGLGNISSKYR) are cytoplasmic. The helical transmembrane segment at 526–546 (WFAIVYLIVFFLLIPLAVFGL) threads the bilayer. The Extracellular segment spans residues 547-550 (SLIG). The chain crosses the membrane as a helical span at residues 551–571 (WPVLVGVASPIVLVILLVVVL). At 572-693 (KILQSFCPGS…TKIVSSVTAL (122 aa)) the chain is on the cytoplasmic side.

Belongs to the SLC34A transporter family. Post-translationally, glycosylated.

It localises to the apical cell membrane. The enzyme catalyses 3 Na(+)(out) + phosphate(out) = 3 Na(+)(in) + phosphate(in). Involved in actively transporting phosphate into cells via Na(+) cotransport. The chain is Sodium-dependent phosphate transport protein 2B (SLC34A2) from Bos taurus (Bovine).